Consider the following 280-residue polypeptide: GTP-binding protein rhoC (280 aa).

Positions 13–59 (TSRRHSLVTPPPSVAPRQNRMRSQSVRVSNGTVSTDNSMSSGRVSEA) are disordered. Over residues 33–59 (MRSQSVRVSNGTVSTDNSMSSGRVSEA) the composition is skewed to polar residues. 76-83 (GDGGCGKT) is a GTP binding site. The short motif at 98–106 (YVPTVFENY) is the Effector region element. GTP contacts are provided by residues 125 to 129 (DTAGQ) and 183 to 186 (LKSD). Residues 251–275 (WDTRLPSSSGKPGGKPIGGKKIKKR) are disordered. At cysteine 277 the chain carries Cysteine methyl ester. Cysteine 277 carries the S-geranylgeranyl cysteine lipid modification. The propeptide at 278–280 (KIL) is removed in mature form.

This sequence belongs to the small GTPase superfamily. Rho family.

Its subcellular location is the cell membrane. The chain is GTP-binding protein rhoC (rhoC) from Emericella nidulans (strain FGSC A4 / ATCC 38163 / CBS 112.46 / NRRL 194 / M139) (Aspergillus nidulans).